A 552-amino-acid chain; its full sequence is Putative lipase ATG15 (552 aa).

Residues 1–26 lie on the Cytoplasmic side of the membrane; sequence MLHITEKEQTRGLRQLEKRGKRLLPP. Residues 27-49 form a helical; Signal-anchor for type II membrane protein membrane-spanning segment; that stretch reads LIKFIWFCLISAACVAATTFYWL. Residues 50–552 are Lumenal-facing; that stretch reads RLSPVHNIHK…WRFVSHDDKE (503 aa). 5 N-linked (GlcNAc...) asparagine glycosylation sites follow: asparagine 63, asparagine 147, asparagine 239, asparagine 307, and asparagine 391. Serine 409 functions as the Charge relay system in the catalytic mechanism. N-linked (GlcNAc...) asparagine glycosylation is present at asparagine 526.

It belongs to the AB hydrolase superfamily. Lipase family. In terms of assembly, binds to both phosphatidylinositol (PI) and phosphatidylinositol 3,5-bisphosphate (PIP2).

The protein localises to the endosome. It is found in the multivesicular body membrane. Its subcellular location is the prevacuolar compartment membrane. It carries out the reaction a triacylglycerol + H2O = a diacylglycerol + a fatty acid + H(+). Functionally, lipase which is essential for lysis of subvacuolar cytoplasm to vacuole targeted bodies and intravacuolar autophagic bodies. Involved in the lysis of intravacuolar multivesicular body (MVB) vesicles. The intravacuolar membrane disintegration by ATG15 is critical to life span extension. The protein is Putative lipase ATG15 (ATG15) of Lodderomyces elongisporus (strain ATCC 11503 / CBS 2605 / JCM 1781 / NBRC 1676 / NRRL YB-4239) (Yeast).